A 394-amino-acid polypeptide reads, in one-letter code: Small RNA 2'-O-methyltransferase (394 aa).

S-adenosyl-L-methionine-binding residues include D78 and S114. E132, E135, H136, and H181 together coordinate Mg(2+).

The protein belongs to the methyltransferase superfamily. HEN1 family. Mg(2+) is required as a cofactor.

The protein localises to the cytoplasm. The enzyme catalyses small RNA 3'-end nucleotide + S-adenosyl-L-methionine = small RNA 3'-end 2'-O-methylnucleotide + S-adenosyl-L-homocysteine + H(+). In terms of biological role, methyltransferase that adds a 2'-O-methyl group at the 3'-end of piRNAs, a class of 24 to 30 nucleotide RNAs that are generated by a Dicer-independent mechanism and are primarily derived from transposons and other repeated sequence elements. This probably protects the 3'-end of piRNAs from uridylation activity and subsequent degradation. Stabilization of piRNAs is essential for gametogenesis. This Rattus norvegicus (Rat) protein is Small RNA 2'-O-methyltransferase (Henmt1).